The following is a 357-amino-acid chain: Phosphoribosylformylglycinamidine cyclo-ligase (357 aa).

Belongs to the AIR synthase family.

It is found in the cytoplasm. The catalysed reaction is 2-formamido-N(1)-(5-O-phospho-beta-D-ribosyl)acetamidine + ATP = 5-amino-1-(5-phospho-beta-D-ribosyl)imidazole + ADP + phosphate + H(+). It functions in the pathway purine metabolism; IMP biosynthesis via de novo pathway; 5-amino-1-(5-phospho-D-ribosyl)imidazole from N(2)-formyl-N(1)-(5-phospho-D-ribosyl)glycinamide: step 2/2. The chain is Phosphoribosylformylglycinamidine cyclo-ligase from Rhizobium johnstonii (strain DSM 114642 / LMG 32736 / 3841) (Rhizobium leguminosarum bv. viciae).